The sequence spans 107 residues: Nucleoid-associated protein A1G_07310 (107 aa).

Belongs to the YbaB/EbfC family. In terms of assembly, homodimer.

The protein resides in the cytoplasm. It localises to the nucleoid. Functionally, binds to DNA and alters its conformation. May be involved in regulation of gene expression, nucleoid organization and DNA protection. The chain is Nucleoid-associated protein A1G_07310 from Rickettsia rickettsii (strain Sheila Smith).